Reading from the N-terminus, the 78-residue chain is Toxin BmTxKS4 (78 aa).

The N-terminal stretch at 1 to 21 is a signal peptide; the sequence is MKLKISFLILVLFSVFFAIEG. Residues 22–32 constitute a propeptide that is removed on maturation; that stretch reads IIKWFPASVNG.

Contains 3 disulfide bonds. As to expression, expressed by the venom gland.

Its subcellular location is the secreted. Its function is as follows. Reversibly inhibits potassium channels. This chain is Toxin BmTxKS4, found in Olivierus martensii (Manchurian scorpion).